The sequence spans 347 residues: MSARHGQSSYRDRSDEFFKIVETLRRSIAPAPAANNVPYGNNRNDGARREDLINKSEFNKRASHIGLAINQTSQKLSKLAKLAKRTSVFDDPTQEIQELTVVIKQEISALNSALVDLQLFRSSQNDEGNNSRDRDKSTHSATVVDDLKYRLMDTTKEFKDVLTMRTENMKVHESRRQLFSSNASKESTNPFVRQRPLAAKAAASESVPLPWANGSSSSSSQLVPWKPGEGESSPLLQQSQQQQQQQQQQMVPLQDTYMQGRAEALHTVESTIHELSSIFTQLATMVSQQGEIAIRIDQNMEDTLANVEGAQSQLARYLNSISSNRWLMMKIFFVLIAFLMIFLFFVA.

Residues 1 to 325 (MSARHGQSSY…RYLNSISSNR (325 aa)) are Cytoplasmic-facing. 2 disordered regions span residues 172-191 (HESRRQLFSSNASKESTNPF) and 208-251 (PLPW…QQMV). 2 stretches are compositionally biased toward polar residues: residues 177-191 (QLFSSNASKESTNPF) and 213-222 (NGSSSSSSQL). A compositionally biased stretch (low complexity) spans 237–249 (QQSQQQQQQQQQQ). A t-SNARE coiled-coil homology domain is found at 255 to 317 (DTYMQGRAEA…EGAQSQLARY (63 aa)). A helical; Anchor for type IV membrane protein membrane pass occupies residues 326–346 (WLMMKIFFVLIAFLMIFLFFV). Position 347 (alanine 347) is a topological domain, vesicular.

Belongs to the syntaxin family. Part of the t-SNARE complex.

It localises to the golgi apparatus. The protein localises to the cis-Golgi network membrane. Functionally, vesicle trafficking protein that functions in the secretory pathway. In Arabidopsis thaliana (Mouse-ear cress), this protein is Syntaxin-32 (SYP32).